We begin with the raw amino-acid sequence, 402 residues long: MLSPEVRALVKATAPVLKEHGEALTRHFYTRMLGGNPELRQLFNQGHQQSGQQQQALAAAVAAYAEHIDDPSVLLPVVERIAHKHVSLGVRAEHYAIVGKHLLASIREVLGEAATDELIDAWAAAYGQLADLLIGRERALYAAAASRDGGWTGWRAFKVVRKTPESAEITSFYLAPADGGATPDYLPGQYVSVRVYVPELGLMQPRQYSLSEAPGMPGQLRISVKREAGSPAGMVSGTLHNRINEGDVLDVSPPQGDFTLDAEDGRPVVLLSGGVGLTPMVSMLNHLTARDDGRQIRFVHACREAGVHAMKEHINALAAKRPNVRKAVFYERVGADDRRGVDYDYEGRVDLHAIRDEVILPDADYYLCGPLPFMQAQRRALADLGVAEHRIHAEVFGTGGVA.

In terms of domain architecture, Globin spans 1 to 138; that stretch reads MLSPEVRALV…LADLLIGRER (138 aa). His85 is a binding site for heme b. Residues Tyr95 and Glu137 each act as charge relay system in the active site. The interval 149–402 is reductase; it reads GGWTGWRAFK…AEVFGTGGVA (254 aa). The 110-residue stretch at 152–261 folds into the FAD-binding FR-type domain; the sequence is TGWRAFKVVR…SPPQGDFTLD (110 aa). FAD is bound by residues Tyr190 and 206-209; that span reads RQYS. 274 to 279 provides a ligand contact to NADP(+); it reads GVGLTP. 395–398 is a binding site for FAD; the sequence is VFGT.

The protein belongs to the globin family. Two-domain flavohemoproteins subfamily. In the C-terminal section; belongs to the flavoprotein pyridine nucleotide cytochrome reductase family. Requires heme b as cofactor. FAD serves as cofactor.

The catalysed reaction is 2 nitric oxide + NADPH + 2 O2 = 2 nitrate + NADP(+) + H(+). It catalyses the reaction 2 nitric oxide + NADH + 2 O2 = 2 nitrate + NAD(+) + H(+). Functionally, is involved in NO detoxification in an aerobic process, termed nitric oxide dioxygenase (NOD) reaction that utilizes O(2) and NAD(P)H to convert NO to nitrate, which protects the bacterium from various noxious nitrogen compounds. Therefore, plays a central role in the inducible response to nitrosative stress. The chain is Flavohemoprotein from Bordetella bronchiseptica (strain ATCC BAA-588 / NCTC 13252 / RB50) (Alcaligenes bronchisepticus).